The sequence spans 333 residues: GTP 3',8-cyclase (333 aa).

Residues 7–221 (KFGRVHDYIR…FEACNEAGYE (215 aa)) enclose the Radical SAM core domain. Residue Arg-16 participates in GTP binding. Cys-23 and Cys-27 together coordinate [4Fe-4S] cluster. Tyr-29 provides a ligand contact to S-adenosyl-L-methionine. Cys-30 provides a ligand contact to [4Fe-4S] cluster. Arg-66 contributes to the GTP binding site. Gly-70 is an S-adenosyl-L-methionine binding site. Thr-97 contributes to the GTP binding site. Ser-121 contributes to the S-adenosyl-L-methionine binding site. Lys-158 is a GTP binding site. Met-192 provides a ligand contact to S-adenosyl-L-methionine. Positions 257 and 260 each coordinate [4Fe-4S] cluster. A GTP-binding site is contributed by 262 to 264 (RLR). Residue Cys-274 coordinates [4Fe-4S] cluster.

The protein belongs to the radical SAM superfamily. MoaA family. In terms of assembly, monomer and homodimer. [4Fe-4S] cluster is required as a cofactor.

It carries out the reaction GTP + AH2 + S-adenosyl-L-methionine = (8S)-3',8-cyclo-7,8-dihydroguanosine 5'-triphosphate + 5'-deoxyadenosine + L-methionine + A + H(+). The protein operates within cofactor biosynthesis; molybdopterin biosynthesis. In terms of biological role, catalyzes the cyclization of GTP to (8S)-3',8-cyclo-7,8-dihydroguanosine 5'-triphosphate. The protein is GTP 3',8-cyclase of Listeria monocytogenes serotype 4b (strain CLIP80459).